The following is a 129-amino-acid chain: Large ribosomal subunit protein bL12 (129 aa).

Belongs to the bacterial ribosomal protein bL12 family. In terms of assembly, homodimer. Part of the ribosomal stalk of the 50S ribosomal subunit. Forms a multimeric L10(L12)X complex, where L10 forms an elongated spine to which 2 to 4 L12 dimers bind in a sequential fashion. Binds GTP-bound translation factors.

Functionally, forms part of the ribosomal stalk which helps the ribosome interact with GTP-bound translation factors. Is thus essential for accurate translation. The protein is Large ribosomal subunit protein bL12 of Thermosipho melanesiensis (strain DSM 12029 / CIP 104789 / BI429).